We begin with the raw amino-acid sequence, 232 residues long: Purine nucleoside phosphorylase DeoD-type (232 aa).

His-4 provides a ligand contact to a purine D-ribonucleoside. Residues Gly-20, Arg-24, Arg-43, and 87–90 contribute to the phosphate site; that span reads RIGT. A purine D-ribonucleoside contacts are provided by residues 179 to 181 and 203 to 204; these read EME and SD. Asp-204 acts as the Proton donor in catalysis.

Belongs to the PNP/UDP phosphorylase family. Homohexamer; trimer of homodimers.

The catalysed reaction is a purine D-ribonucleoside + phosphate = a purine nucleobase + alpha-D-ribose 1-phosphate. It catalyses the reaction a purine 2'-deoxy-D-ribonucleoside + phosphate = a purine nucleobase + 2-deoxy-alpha-D-ribose 1-phosphate. Functionally, catalyzes the reversible phosphorolytic breakdown of the N-glycosidic bond in the beta-(deoxy)ribonucleoside molecules, with the formation of the corresponding free purine bases and pentose-1-phosphate. This chain is Purine nucleoside phosphorylase DeoD-type, found in Caldanaerobacter subterraneus subsp. tengcongensis (strain DSM 15242 / JCM 11007 / NBRC 100824 / MB4) (Thermoanaerobacter tengcongensis).